A 178-amino-acid chain; its full sequence is MADGKAGEEKPEKSQRAGAAGGPEEEAEKPVKTKTVSSSNGGESSSRSAEKRSAEEEAVDLPTKPTKISKFGFAIGSQTTKKASAISIKLGSSKPKETVPTLAPKTLSVAAAFNEDEDSEPEEMPPEAKMRMKNIGRDTPTSAGPNSFNKGKHGFSDNQKLWERNIKSHLGNVHDQDN.

The span at 1–15 (MADGKAGEEKPEKSQ) shows a compositional bias: basic and acidic residues. A disordered region spans residues 1–84 (MADGKAGEEK…IGSQTTKKAS (84 aa)). Position 2 is an N-acetylalanine (A2). Over residues 37-47 (SSSNGGESSSR) the composition is skewed to low complexity. S53 bears the Phosphoserine mark. The residue at position 64 (K64) is an N6-acetyllysine. Residues S77, S87, and S119 each carry the phosphoserine modification. A disordered region spans residues 134–178 (NIGRDTPTSAGPNSFNKGKHGFSDNQKLWERNIKSHLGNVHDQDN). Phosphothreonine is present on T139. A compositionally biased stretch (polar residues) spans 139-149 (TPTSAGPNSFN). S147 is modified (phosphoserine). An N6-acetyllysine mark is found at K150 and K152. The span at 160–178 (KLWERNIKSHLGNVHDQDN) shows a compositional bias: basic and acidic residues.

Interacts with UHRF2/NIRF. Ubiquitinated; mediated by UHRF2 and leading to its subsequent proteasomal degradation. In terms of processing, N-terminally acetylated in a HYPK-dependent manner by the NatA acetyltransferase complex which is composed of NAA10 and NAA15.

It is found in the nucleus. Its function is as follows. May be involved in cell cycle regulation. The protein is PEST proteolytic signal-containing nuclear protein (PCNP) of Pongo abelii (Sumatran orangutan).